Here is a 221-residue protein sequence, read N- to C-terminus: MKKVLADKESLIEALKLALSTEYNVKRNFTQSVEIILTFKGIDMKKGDLKLREIVPLPKQPSKAKRVLVVPSFEQLEYAKKASPNVVITREELQKLQGQKRPVKKLARQNEWFLINQESMALAGRILGPALGPRGKFPTPLPNTADISEYINRFKRSVLVKTKDQPQVQVFIGTEDMKPEDLAENAIAVLNAIENKAKVETNLRNIYVKTTMGKAVKVKRA.

It belongs to the universal ribosomal protein uL1 family. As to quaternary structure, part of the 50S ribosomal subunit.

Its function is as follows. Probably involved in E site tRNA release. Binds directly to 23S rRNA. Protein L1 is also a translational repressor protein, it controls the translation of its operon by binding to its mRNA. The protein is Large ribosomal subunit protein uL1 of Sulfolobus acidocaldarius (strain ATCC 33909 / DSM 639 / JCM 8929 / NBRC 15157 / NCIMB 11770).